Reading from the N-terminus, the 317-residue chain is Metaxin-1 (317 aa).

Residues Lys38, Lys41, and Lys78 each participate in a glycyl lysine isopeptide (Lys-Gly) (interchain with G-Cter in ubiquitin) cross-link. The helical transmembrane segment at 164-184 (EELEKELYQEAQECLTLLSQR) threads the bilayer.

This sequence belongs to the metaxin family. Interacts with MTX2/metaxin-2. Associates with the mitochondrial contact site and cristae organizing system (MICOS) complex, composed of at least MICOS10/MIC10, CHCHD3/MIC19, CHCHD6/MIC25, APOOL/MIC27, IMMT/MIC60, APOO/MIC23/MIC26 and QIL1/MIC13. This complex was also known under the names MINOS or MitOS complex. The MICOS complex associates with mitochondrial outer membrane proteins SAMM50, MTX1 and MTX2 (together described as components of the mitochondrial outer membrane sorting assembly machinery (SAM) complex) and DNAJC11, mitochondrial inner membrane protein TMEM11 and with HSPA9. The MICOS and SAM complexes together with DNAJC11 are part of a large protein complex spanning both membranes termed the mitochondrial intermembrane space bridging (MIB) complex. Interacts with ARMC1. Post-translationally, ubiquitinated by PRKN during mitophagy, leading to its degradation and enhancement of mitophagy. Deubiquitinated by USP30.

The protein localises to the mitochondrion outer membrane. Involved in transport of proteins into the mitochondrion. Essential for embryonic development. The protein is Metaxin-1 (MTX1) of Bos taurus (Bovine).